The chain runs to 173 residues: C-phycocyanin beta subunit (173 aa).

N4-methylasparagine is present on Asn-73. The (2R,3E)-phycocyanobilin site is built by Cys-83 and Cys-154.

It belongs to the phycobiliprotein family. As to quaternary structure, heterodimer of an alpha and a beta subunit. Part of 2 PBS rod complexes, the conventional PBS rod and a photosystem I-specific CpcL-PBS rod. Contains two covalently linked bilin chromophores.

It is found in the cellular thylakoid membrane. Its function is as follows. Light-harvesting photosynthetic bile pigment-protein from the phycobiliprotein complex (phycobilisome, PBS). Phycocyanin is the major phycobiliprotein in the PBS rod. This Nostoc sp. (strain PCC 7120 / SAG 25.82 / UTEX 2576) protein is C-phycocyanin beta subunit (cpcB).